The primary structure comprises 39 residues: Non-specific lipid-transfer protein (39 aa).

This sequence belongs to the plant LTP family.

Plant non-specific lipid-transfer proteins transfer phospholipids as well as galactolipids across membranes. May play a role in wax or cutin deposition in the cell walls of expanding epidermal cells and certain secretory tissues. This chain is Non-specific lipid-transfer protein, found in Musa acuminata (Banana).